Consider the following 242-residue polypeptide: NAD(P)H-quinone oxidoreductase subunit K (242 aa).

[4Fe-4S] cluster is bound by residues Cys60, Cys61, Cys125, and Cys156.

It belongs to the complex I 20 kDa subunit family. In terms of assembly, NDH-1 can be composed of about 15 different subunits; different subcomplexes with different compositions have been identified which probably have different functions. Requires [4Fe-4S] cluster as cofactor.

The protein localises to the cellular thylakoid membrane. The enzyme catalyses a plastoquinone + NADH + (n+1) H(+)(in) = a plastoquinol + NAD(+) + n H(+)(out). The catalysed reaction is a plastoquinone + NADPH + (n+1) H(+)(in) = a plastoquinol + NADP(+) + n H(+)(out). In terms of biological role, NDH-1 shuttles electrons from an unknown electron donor, via FMN and iron-sulfur (Fe-S) centers, to quinones in the respiratory and/or the photosynthetic chain. The immediate electron acceptor for the enzyme in this species is believed to be plastoquinone. Couples the redox reaction to proton translocation, and thus conserves the redox energy in a proton gradient. Cyanobacterial NDH-1 also plays a role in inorganic carbon-concentration. The protein is NAD(P)H-quinone oxidoreductase subunit K of Prochlorococcus marinus (strain SARG / CCMP1375 / SS120).